A 265-amino-acid polypeptide reads, in one-letter code: Hydroxyethylthiazole kinase (265 aa).

Met50 is a substrate binding site. Residues Arg125 and Thr171 each coordinate ATP. Residue Gly198 coordinates substrate.

The protein belongs to the Thz kinase family. Mg(2+) is required as a cofactor.

The catalysed reaction is 5-(2-hydroxyethyl)-4-methylthiazole + ATP = 4-methyl-5-(2-phosphooxyethyl)-thiazole + ADP + H(+). It functions in the pathway cofactor biosynthesis; thiamine diphosphate biosynthesis; 4-methyl-5-(2-phosphoethyl)-thiazole from 5-(2-hydroxyethyl)-4-methylthiazole: step 1/1. In terms of biological role, catalyzes the phosphorylation of the hydroxyl group of 4-methyl-5-beta-hydroxyethylthiazole (THZ). In Salmonella paratyphi B (strain ATCC BAA-1250 / SPB7), this protein is Hydroxyethylthiazole kinase.